Reading from the N-terminus, the 627-residue chain is Threonine--tRNA ligase (627 aa).

The editing domain stretch occupies residues 1 to 147; the sequence is MRMLLIHSDY…TIVPSGEAKA (147 aa). Residues 208-507 form a catalytic region; it reads PHVRIMLEQE…QSKGIKPMFP (300 aa). 3 residues coordinate Zn(2+): C300, H352, and H476.

The protein belongs to the class-II aminoacyl-tRNA synthetase family. As to quaternary structure, homodimer. It depends on Zn(2+) as a cofactor.

The protein resides in the cytoplasm. The catalysed reaction is tRNA(Thr) + L-threonine + ATP = L-threonyl-tRNA(Thr) + AMP + diphosphate + H(+). In terms of biological role, catalyzes the attachment of threonine to tRNA(Thr) in a two-step reaction: L-threonine is first activated by ATP to form Thr-AMP and then transferred to the acceptor end of tRNA(Thr). Also edits incorrectly charged L-seryl-tRNA(Thr). The chain is Threonine--tRNA ligase from Thermococcus onnurineus (strain NA1).